The primary structure comprises 56 residues: Arcadin-3 (56 aa).

It is found in the cytoplasm. Its subcellular location is the cytoskeleton. In terms of biological role, part of an actin-like archaeal cytoskeleton. The polypeptide is Arcadin-3 (Pyrobaculum calidifontis (strain DSM 21063 / JCM 11548 / VA1)).